Reading from the N-terminus, the 207-residue chain is Large ribosomal subunit protein uL4 (207 aa).

Positions 52–77 (RGWADVSGGGRKPWRQKGTGRARAGS) are disordered.

This sequence belongs to the universal ribosomal protein uL4 family. As to quaternary structure, part of the 50S ribosomal subunit.

Its function is as follows. One of the primary rRNA binding proteins, this protein initially binds near the 5'-end of the 23S rRNA. It is important during the early stages of 50S assembly. It makes multiple contacts with different domains of the 23S rRNA in the assembled 50S subunit and ribosome. Forms part of the polypeptide exit tunnel. The chain is Large ribosomal subunit protein uL4 from Moorella thermoacetica (strain ATCC 39073 / JCM 9320).